Consider the following 405-residue polypeptide: Riboflavin biosynthesis protein RibBA (405 aa).

Residues 1–205 (MEQIKLDSIA…IKDLIEYRLT (205 aa)) form a DHBP synthase region. Residues 30–31 (RE), aspartate 35, 144–148 (RVGHT), and glutamate 168 each bind D-ribulose 5-phosphate. Glutamate 31 provides a ligand contact to Mg(2+). A Mg(2+)-binding site is contributed by histidine 147. Residues 206–405 (HESLVKREIG…KMGHTILKKD (200 aa)) are GTP cyclohydrolase II. A GTP-binding site is contributed by 256-260 (RVHSS). Cysteine 261, cysteine 272, and cysteine 274 together coordinate Zn(2+). GTP contacts are provided by residues glutamine 277, 299–301 (EGR), and threonine 321. Aspartate 333 acts as the Proton acceptor; for GTP cyclohydrolase activity in catalysis. Catalysis depends on arginine 335, which acts as the Nucleophile; for GTP cyclohydrolase activity. Threonine 356 and lysine 361 together coordinate GTP.

It in the N-terminal section; belongs to the DHBP synthase family. The protein in the C-terminal section; belongs to the GTP cyclohydrolase II family. Requires Mg(2+) as cofactor. Mn(2+) serves as cofactor. Zn(2+) is required as a cofactor.

The enzyme catalyses D-ribulose 5-phosphate = (2S)-2-hydroxy-3-oxobutyl phosphate + formate + H(+). It catalyses the reaction GTP + 4 H2O = 2,5-diamino-6-hydroxy-4-(5-phosphoribosylamino)-pyrimidine + formate + 2 phosphate + 3 H(+). It participates in cofactor biosynthesis; riboflavin biosynthesis; 2-hydroxy-3-oxobutyl phosphate from D-ribulose 5-phosphate: step 1/1. The protein operates within cofactor biosynthesis; riboflavin biosynthesis; 5-amino-6-(D-ribitylamino)uracil from GTP: step 1/4. Its function is as follows. Catalyzes the conversion of D-ribulose 5-phosphate to formate and 3,4-dihydroxy-2-butanone 4-phosphate. Catalyzes the conversion of GTP to 2,5-diamino-6-ribosylamino-4(3H)-pyrimidinone 5'-phosphate (DARP), formate and pyrophosphate. The sequence is that of Riboflavin biosynthesis protein RibBA from Cytophaga hutchinsonii (strain ATCC 33406 / DSM 1761 / CIP 103989 / NBRC 15051 / NCIMB 9469 / D465).